Consider the following 214-residue polypeptide: Phosphoenolpyruvate guanylyltransferase 2 (214 aa).

Phosphoenolpyruvate-binding residues include Thr-135, Gly-150, and Ser-153.

It belongs to the CofC family.

It catalyses the reaction phosphoenolpyruvate + GTP + H(+) = enolpyruvoyl-2-diphospho-5'-guanosine + diphosphate. It participates in cofactor biosynthesis; coenzyme F420 biosynthesis. In terms of biological role, guanylyltransferase that catalyzes the activation of phosphoenolpyruvate (PEP) as enolpyruvoyl-2-diphospho-5'-guanosine, via the condensation of PEP with GTP. It is involved in the biosynthesis of coenzyme F420, a hydride carrier cofactor. This chain is Phosphoenolpyruvate guanylyltransferase 2, found in Rhodococcus jostii (strain RHA1).